A 108-amino-acid chain; its full sequence is FK506-binding protein 1A (108 aa).

The interval 1–20 (MGVEVQRISPGDGKNFPKPG) is disordered. Residues 20 to 108 (GDTVSIHYTG…TFEVELLKIN (89 aa)) form the PPIase FKBP-type domain.

Belongs to the FKBP-type PPIase family. FKBP1 subfamily.

Its subcellular location is the cytoplasm. It carries out the reaction [protein]-peptidylproline (omega=180) = [protein]-peptidylproline (omega=0). With respect to regulation, inhibited by both FK506 and rapamycin. Its function is as follows. PPIases accelerate the folding of proteins. It catalyzes the cis-trans isomerization of proline imidic peptide bonds in oligopeptides. This Emericella nidulans (strain FGSC A4 / ATCC 38163 / CBS 112.46 / NRRL 194 / M139) (Aspergillus nidulans) protein is FK506-binding protein 1A (fprA).